The chain runs to 88 residues: Small ribosomal subunit protein uS15 (88 aa).

Belongs to the universal ribosomal protein uS15 family. Part of the 30S ribosomal subunit. Forms a bridge to the 50S subunit in the 70S ribosome, contacting the 23S rRNA.

Functionally, one of the primary rRNA binding proteins, it binds directly to 16S rRNA where it helps nucleate assembly of the platform of the 30S subunit by binding and bridging several RNA helices of the 16S rRNA. Its function is as follows. Forms an intersubunit bridge (bridge B4) with the 23S rRNA of the 50S subunit in the ribosome. This Borreliella afzelii (strain PKo) (Borrelia afzelii) protein is Small ribosomal subunit protein uS15.